Consider the following 263-residue polypeptide: Tropinone reductase homolog At2g29300 (263 aa).

Position 13–37 (13–37 (LVTGAASGIGYAIVEELAGFGARIH)) interacts with NADP(+). Ser-146 is a substrate binding site. Tyr-160 functions as the Proton acceptor in the catalytic mechanism.

It belongs to the short-chain dehydrogenases/reductases (SDR) family. SDR65C subfamily.

The protein is Tropinone reductase homolog At2g29300 of Arabidopsis thaliana (Mouse-ear cress).